Reading from the N-terminus, the 548-residue chain is Acetolactate synthase isozyme 2 large subunit (548 aa).

Glutamate 47 is a thiamine diphosphate binding site. FAD-binding positions include arginine 149, 251 to 272, and 294 to 313; these read HGTK…VGAR and DIDP…LQGD. Residues 377-457 are thiamine pyrophosphate binding; it reads QHQMWAAQHI…LKIVLLDNQR (81 aa). Positions 428 and 455 each coordinate Mg(2+).

The protein belongs to the TPP enzyme family. As to quaternary structure, tetramer of two large (IlvG) and two small (IlvM) chains. FAD is required as a cofactor. It depends on Mg(2+) as a cofactor. The cofactor is thiamine diphosphate.

The enzyme catalyses 2 pyruvate + H(+) = (2S)-2-acetolactate + CO2. It participates in amino-acid biosynthesis; L-isoleucine biosynthesis; L-isoleucine from 2-oxobutanoate: step 1/4. Its pathway is amino-acid biosynthesis; L-valine biosynthesis; L-valine from pyruvate: step 1/4. Its activity is regulated as follows. Inhibited by the herbicides chlorimuron ethyl, chlorsulfuron and imazapyr. Its function is as follows. Catalyzes the first step in the biosynthesis of branched-chain amino acids. This is Acetolactate synthase isozyme 2 large subunit (ilvG) from Escherichia coli (strain K12).